Here is a 360-residue protein sequence, read N- to C-terminus: Vitopine synthase (360 aa).

Belongs to the lysopine/nopaline/octopine/opine/vitopine dehydrogenases family.

The chain is Vitopine synthase (vis) from Allorhizobium ampelinum (strain ATCC BAA-846 / DSM 112012 / S4) (Agrobacterium vitis (strain S4)).